The chain runs to 342 residues: Delta-aminolevulinic acid dehydratase (342 aa).

Zn(2+) is bound by residues C133, C135, and C143. The Schiff-base intermediate with substrate role is filled by K210. Residues R220 and R232 each coordinate 5-aminolevulinate. S254 carries the phosphoserine modification. K263 functions as the Schiff-base intermediate with substrate in the catalytic mechanism. The 5-aminolevulinate site is built by S290 and Y329.

It belongs to the ALAD family. As to quaternary structure, homooctamer. It depends on Zn(2+) as a cofactor.

It catalyses the reaction 2 5-aminolevulinate = porphobilinogen + 2 H2O + H(+). It functions in the pathway porphyrin-containing compound metabolism; protoporphyrin-IX biosynthesis; coproporphyrinogen-III from 5-aminolevulinate: step 1/4. Its activity is regulated as follows. Inhibited by divalent lead ions. In terms of biological role, catalyzes an early step in the biosynthesis of tetrapyrroles. Binds two molecules of 5-aminolevulinate per subunit, each at a distinct site, and catalyzes their condensation to form porphobilinogen. This chain is Delta-aminolevulinic acid dehydratase (HEM2), found in Saccharomyces cerevisiae (strain ATCC 204508 / S288c) (Baker's yeast).